The chain runs to 394 residues: Endothelial cell-selective adhesion molecule (394 aa).

A signal peptide spans 1–29; sequence MILPARTPETSLLRVLFLGLSTLAAFSLA. Residues 30–251 lie on the Extracellular side of the membrane; the sequence is QMELHVPPGL…LDVMTGSKAA (222 aa). The region spanning 37–146 is the Ig-like V-type domain; the sequence is PGLNKLEAVE…DGKNIGHSIK (110 aa). N-linked (GlcNAc...) asparagine glycans are attached at residues Asn111, Asn172, Asn216, and Asn239. An Ig-like C2-type domain is found at 156-243; that stretch reads PAPPSCSFQG…GFAQCNVTLD (88 aa). A disulfide bridge connects residues Cys177 and Cys227. A helical transmembrane segment spans residues 252 to 272; sequence VVAGAVVGTFVGLVLIAGLVL. Topologically, residues 273–394 are cytoplasmic; that stretch reads LYQRRSKTLE…PAQSQAGSLV (122 aa). Residues 300–372 are disordered; it reads WTKGSDTISK…SLTPGGVSSS (73 aa). 2 stretches are compositionally biased toward polar residues: residues 303–318 and 335–347; these read GSDT…SVTS and FTPT…QALS. A Phosphoserine modification is found at Ser304. 2 positions are modified to phosphothreonine: Thr336 and Thr338. Ser340, Ser343, and Ser348 each carry phosphoserine.

Interacts with MAGI1.

The protein resides in the cell junction. It localises to the adherens junction. Its subcellular location is the tight junction. The protein localises to the cell membrane. In terms of biological role, can mediate aggregation most likely through a homophilic molecular interaction. The polypeptide is Endothelial cell-selective adhesion molecule (Esam) (Rattus norvegicus (Rat)).